The primary structure comprises 369 residues: 3-dehydroquinate synthase (369 aa).

Residues Asp-70 to Lys-75, Gly-104 to Asp-108, Thr-128 to Thr-129, Lys-141, Lys-150, and Thr-168 to Thr-171 contribute to the NAD(+) site. Residues Glu-183, His-246, and His-262 each coordinate Zn(2+).

Belongs to the sugar phosphate cyclases superfamily. Dehydroquinate synthase family. It depends on Co(2+) as a cofactor. The cofactor is Zn(2+). Requires NAD(+) as cofactor.

It localises to the cytoplasm. It catalyses the reaction 7-phospho-2-dehydro-3-deoxy-D-arabino-heptonate = 3-dehydroquinate + phosphate. Its pathway is metabolic intermediate biosynthesis; chorismate biosynthesis; chorismate from D-erythrose 4-phosphate and phosphoenolpyruvate: step 2/7. In terms of biological role, catalyzes the conversion of 3-deoxy-D-arabino-heptulosonate 7-phosphate (DAHP) to dehydroquinate (DHQ). The polypeptide is 3-dehydroquinate synthase (Rhodococcus erythropolis (strain PR4 / NBRC 100887)).